We begin with the raw amino-acid sequence, 223 residues long: UPF0441 protein YgiB (223 aa).

The disordered stretch occupies residues 201 to 223 (ESVAKQSAMQRSAAGTSTRSMGG). Polar residues predominate over residues 204 to 223 (AKQSAMQRSAAGTSTRSMGG).

This sequence belongs to the UPF0441 family.

This chain is UPF0441 protein YgiB, found in Salmonella arizonae (strain ATCC BAA-731 / CDC346-86 / RSK2980).